The primary structure comprises 673 residues: MTDRFQLVSPYSPAGDQPAAIDKLVANFEAGLAKQTLLGVTGSGKTYTIANVVQQVQRPTLVMAPNKTLAAQLYGEFKSFFPHNAVEYFVSYYDYYQPEAYVPSSDTFIEKDSSINEHIEQMRLSATKTLLSRRDSLVVATVSAIYGLGAPEDYLSLRLILSVGEHIDQRQLIRHLTDLQYTRNEFELTRGAFRVRGEVLDVFPAESDTEALRIELFDGDIEQLTLFDPLTGETLRKLQRYTVYPKTHYATTRERTLSAVDTIKEELKERLEQLYSQNKLVEAQRLAQRTQFDLEMMAEVGFCNGIENYSRHLTGKAPGEPPPTLFDYLPPDALLVIDESHVTIPQIGAMYKGDRSRKETLVEFGFRLPSALDNRPLRFEEWEARSPRSIYVSATPGPYEVRESAGEVTELVVRPTGLIDPVVEIRPVGTQVDDLMSEVHERIKLGDRVLVTTLTKRMAENLTEYLGEHGIRVRYLHSDIDTVERVEIIRDLRLGKFDVLVGINLLREGLDMPEVSLVAILDADKEGFLRSTGSLIQTIGRAARNLRGKAILYADKMTRSMQAAIDETDRRREKQVEYNLEHGITPKSVERPIADIMEGARDDAAEKKSGKGRSKSRHVAEETPDYRAMKPAEIAGKLKSLEQKMYQHAKDLEFEAAAQIRDQIQKLKAASLG.

The Helicase ATP-binding domain occupies 26–414; that stretch reads ANFEAGLAKQ…AGEVTELVVR (389 aa). 39-46 lines the ATP pocket; it reads GVTGSGKT. A Beta-hairpin motif is present at residues 92 to 115; sequence YYDYYQPEAYVPSSDTFIEKDSSI. Positions 431 to 597 constitute a Helicase C-terminal domain; the sequence is QVDDLMSEVH…SVERPIADIM (167 aa). Composition is skewed to basic and acidic residues over residues 600–609 and 618–628; these read ARDDAAEKKS and HVAEETPDYRA. Residues 600–628 are disordered; sequence ARDDAAEKKSGKGRSKSRHVAEETPDYRA. Positions 635-670 constitute a UVR domain; it reads AGKLKSLEQKMYQHAKDLEFEAAAQIRDQIQKLKAA.

The protein belongs to the UvrB family. As to quaternary structure, forms a heterotetramer with UvrA during the search for lesions. Interacts with UvrC in an incision complex.

It localises to the cytoplasm. In terms of biological role, the UvrABC repair system catalyzes the recognition and processing of DNA lesions. A damage recognition complex composed of 2 UvrA and 2 UvrB subunits scans DNA for abnormalities. Upon binding of the UvrA(2)B(2) complex to a putative damaged site, the DNA wraps around one UvrB monomer. DNA wrap is dependent on ATP binding by UvrB and probably causes local melting of the DNA helix, facilitating insertion of UvrB beta-hairpin between the DNA strands. Then UvrB probes one DNA strand for the presence of a lesion. If a lesion is found the UvrA subunits dissociate and the UvrB-DNA preincision complex is formed. This complex is subsequently bound by UvrC and the second UvrB is released. If no lesion is found, the DNA wraps around the other UvrB subunit that will check the other stand for damage. The polypeptide is UvrABC system protein B (Xanthomonas axonopodis pv. citri (strain 306)).